The chain runs to 73 residues: Arabinogalactan protein 16 (73 aa).

A signal peptide spans 1–26 (MASRNSVTGFALFSFVFAVILSLAGA). At Gln-27 the chain carries Pyrrolidone carboxylic acid. Residues Pro-31, Pro-33, and Pro-35 each carry the 4-hydroxyproline modification. Pro-31, Pro-33, and Pro-35 each carry an O-linked (Ara...) hydroxyproline glycan. Ser-37 carries the GPI-anchor amidated serine lipid modification. A propeptide spans 38-73 (DGTSIDQGIAYLLMVVALVLTYLIHPLDASSSYSFF) (removed in mature form).

It belongs to the AG-peptide AGP family. Contains 4-hydroxyproline; hydroxylated on Pro-31, Pro-33 and Pro-35. In terms of processing, O-glycosylated on hydroxyprolines; noncontiguous hydroxylproline residues are glycosylated with arabinogalactan. As to expression, predominantly expressed in flowers.

Its subcellular location is the cell membrane. Proteoglycan that seems to be implicated in diverse developmental roles such as differentiation, cell-cell recognition, embryogenesis and programmed cell death. The polypeptide is Arabinogalactan protein 16 (Arabidopsis thaliana (Mouse-ear cress)).